Reading from the N-terminus, the 1575-residue chain is MPHEELPSLQRPRYGSIVDDERLSAEEMDERRRQNIAYEYLCHLEEAKRWMEVCLVEELPPTTELEEGLRNGVYLAKLAKFFAPKMVSEKKIYDVEQTRYKKSGLHFRHTDNTVQWLRAMEAIGLPKIFYPETTDVYDRKNIPRMIYCIHALSLYLFKLGIAPQIQDLLGKVDFTEEEISNMRKELEKYGIQMPAFSKIGGILANELSVDEAALHAAVIAINEAIEKGVAKQTIITLRNPNAVLTCVDDSLSQEYQKELWEAKKKKEESAKLKNSCISEEERDAYEELLTQAEIQSNISTVNRMAAVDHINAVLQEGDPENTLLALKKPEAQLPAVYPFAAVMYQNELFNLQKQNTSNYLAHEELLIAVEMLSAVALLNQALESSDLVAVQNQLRSPTIGFNNLDEAHVDRYADALLSVKQEALSQGQDTLSWNEIQNCIDMINNQIQEENDRMVVLGYINEAIDAGNPLKTLDTLLLPTANIRDVDPDCAQHYQDVLFYTKSQKLGDPKNVSKVLWLDEIQQAINEANVDENRAKQWVTLVVDVNECLDRKQSDHILTALKSSPSNIHNILPECANKYYDTLVKAKESKTDNESSEGSWVTLNVQEKYNYYYNTDSKEGSWVPPELCLSKESWLTGEEIEDIVEEVTSDYIREKLWSASEDLLVRFEATTLGPALREEFEARKAFLYEQTESVVKIQAFWKGFKQRQEYLHRQQVFAGNVDSVVKIQSWFRMVTARKSYLSRLRYFEDHKNEIVKIQSLLRASKARDDYKALVGSENPPLTVIRKFVYLLDQSDLDFQEELEVARLREEVVTKIRANQQLEKDLNLMDIKIGLLVKNRITLEDVISHRKKLNKKKGGEIEILNNTDNKGIKSLSKERRKTLETYQQLFYLLQTKPSYLAKLIFQMPQNKSTKFMDTVIFTLYNYASNQREEYLLLKLFKTALEEEIKSKVDQVQDIVTGNPTVIKMVVSFNRGARGQNTLRQLLAPVVKEIIEDKALVINTNPVEVYKAWVNQLETQTGEASKLPYDVTTEQALTYPEVKNKLEASIENLRKVTDKVLGSIISSLDLLPYGLRYIAKVLKNSIREKFPDATEEELLKIVGNLLYYRYMNPAIVAPDGFDIIDMTAGGQINSNQRRNLGSVAKVLQHAASNKLFEGENEHLSSMNNYLSETYQEFRKYFQEACDVPEPEEKFNMDKYTDLVTVSKPVIYISIEEIINTHLLLLEHQDAIATEKSDLLNELLESLGEVPTVESFLGEGAVDPNDPNKENTLNQLSKTEISLSLTSKYDVKDGEAVDGRSLMIKTKKLIIDVTRNQPGSTLTEILETPATGQQELEHAKDMESRAVVDSRTPEEGKQSQAVIEDARLPLEQKKRKIQRNLRTLEQTGHVSSKNKYQDILNEIAKDIRNQRIHRKLRKAELSKLQQTLNALNKKAAFYEDQINYYDTYIKTCVDNLKRKNSRRSIKLDGKAEPKGTKRVKPVRYTAAKLHDKGVLLGIDDLQTNQFKNVMFDIIATEDMGIFDVRSKFLGVEMEKVQLNIQDLLQMQYEGVAVMKMFDKVKVNVNLLIYLLNKKFYGK.

A Phosphoserine modification is found at serine 16. The 116-residue stretch at 41–156 (LCHLEEAKRW…YCIHALSLYL (116 aa)) folds into the Calponin-homology (CH) domain. A Phosphothreonine modification is found at threonine 356. A WW domain is found at 594 to 627 (ESSEGSWVTLNVQEKYNYYYNTDSKEGSWVPPEL). 2 positions are modified to phosphoserine: serine 595 and serine 599. 3 consecutive IQ domains span residues 690 to 719 (QTES…VFAG), 720 to 749 (NVDS…YFED), and 750 to 779 (HKNE…SENP). Threonine 782, threonine 881, threonine 1002, and threonine 1269 each carry phosphothreonine. Residues 933 to 1182 (YLLLKLFKTA…QEFRKYFQEA (250 aa)) enclose the Ras-GAP domain. A phosphoserine mark is found at serine 1279 and serine 1461.

Binds to activated CDC42 and RAC1 but does not seem to stimulate their GTPase activity. Associates with calmodulin. In Mus musculus (Mouse), this protein is Ras GTPase-activating-like protein IQGAP2 (Iqgap2).